Here is a 306-residue protein sequence, read N- to C-terminus: Polyisoprenyl-teichoic acid--peptidoglycan teichoic acid transferase TagU (306 aa).

Topologically, residues 1–11 are cytoplasmic; that stretch reads MRAEKRKKKKK. The chain crosses the membrane as a helical; Signal-anchor for type II membrane protein span at residues 12–32; the sequence is ILYTIIALIGIFVLSTGSYAY. The Extracellular portion of the chain corresponds to 33–306; sequence YLWHKAASTV…TAELKESLNK (274 aa).

The protein belongs to the LytR/CpsA/Psr (LCP) family.

The protein localises to the cell membrane. It functions in the pathway cell wall biogenesis. Functionally, may catalyze the final step in cell wall teichoic acid biosynthesis, the transfer of the anionic cell wall polymers (APs) from their lipid-linked precursor to the cell wall peptidoglycan (PG). The protein is Polyisoprenyl-teichoic acid--peptidoglycan teichoic acid transferase TagU of Bacillus licheniformis (strain ATCC 14580 / DSM 13 / JCM 2505 / CCUG 7422 / NBRC 12200 / NCIMB 9375 / NCTC 10341 / NRRL NRS-1264 / Gibson 46).